The following is a 572-amino-acid chain: Urease subunit alpha (572 aa).

Residues 136-572 (GGIDTHIHFI…VPLGQRYFLF (437 aa)) form the Urease domain. Positions 141, 143, and 224 each coordinate Ni(2+). Lys224 carries the post-translational modification N6-carboxylysine. His226 is a substrate binding site. Residues His253 and His279 each contribute to the Ni(2+) site. The Proton donor role is filled by His327. Asp367 provides a ligand contact to Ni(2+).

The protein belongs to the metallo-dependent hydrolases superfamily. Urease alpha subunit family. In terms of assembly, heterotrimer of UreA (gamma), UreB (beta) and UreC (alpha) subunits. Three heterotrimers associate to form the active enzyme. Ni cation serves as cofactor. Carboxylation allows a single lysine to coordinate two nickel ions.

Its subcellular location is the cytoplasm. The catalysed reaction is urea + 2 H2O + H(+) = hydrogencarbonate + 2 NH4(+). Its pathway is nitrogen metabolism; urea degradation; CO(2) and NH(3) from urea (urease route): step 1/1. This Haemophilus influenzae (strain PittGG) protein is Urease subunit alpha.